Consider the following 455-residue polypeptide: Membrane-bound lytic murein transglycosylase F (455 aa).

The N-terminal stretch at Met-1–Ala-21 is a signal peptide. The non-LT domain stretch occupies residues Cys-22 to Val-264. An LT domain region spans residues Lys-265–Leu-455. Glu-309 is a catalytic residue.

This sequence in the N-terminal section; belongs to the bacterial solute-binding protein 3 family. The protein in the C-terminal section; belongs to the transglycosylase Slt family.

Its subcellular location is the cell outer membrane. The catalysed reaction is Exolytic cleavage of the (1-&gt;4)-beta-glycosidic linkage between N-acetylmuramic acid (MurNAc) and N-acetylglucosamine (GlcNAc) residues in peptidoglycan, from either the reducing or the non-reducing ends of the peptidoglycan chains, with concomitant formation of a 1,6-anhydrobond in the MurNAc residue.. Functionally, murein-degrading enzyme that degrades murein glycan strands and insoluble, high-molecular weight murein sacculi, with the concomitant formation of a 1,6-anhydromuramoyl product. Lytic transglycosylases (LTs) play an integral role in the metabolism of the peptidoglycan (PG) sacculus. Their lytic action creates space within the PG sacculus to allow for its expansion as well as for the insertion of various structures such as secretion systems and flagella. The polypeptide is Membrane-bound lytic murein transglycosylase F (Idiomarina loihiensis (strain ATCC BAA-735 / DSM 15497 / L2-TR)).